Here is a 93-residue protein sequence, read N- to C-terminus: Ferredoxin-2 (93 aa).

A 2Fe-2S ferredoxin-type domain is found at 2-91; sequence YKVTLKTPDG…DVVIETHKED (90 aa). 4 residues coordinate [2Fe-2S] cluster: cysteine 37, cysteine 42, cysteine 45, and cysteine 75.

This sequence belongs to the 2Fe2S plant-type ferredoxin family. It depends on [2Fe-2S] cluster as a cofactor.

The protein resides in the plastid. It is found in the chloroplast. Ferredoxins are iron-sulfur proteins that transfer electrons in a wide variety of metabolic reactions. The protein is Ferredoxin-2 of Equisetum telmateia (Great horsetail).